A 321-amino-acid polypeptide reads, in one-letter code: Serine/threonine-protein phosphatase PP1 isozyme 4 (321 aa).

A2 is subject to N-acetylalanine. 4 residues coordinate Mn(2+): D74, H76, D102, and N134. H135 functions as the Proton donor in the catalytic mechanism. Mn(2+)-binding residues include H183 and H258.

Belongs to the PPP phosphatase family. PP-1 subfamily. Interacts with the DELLA proteins RGA and GAI. Interacts with PIF3 and PIF5. Interacts with the auxin efflux carrier PIN1. Mn(2+) serves as cofactor. In terms of tissue distribution, expressed in the vasculature of roots and cotyledons, tips of leaves, guard cells, bases of trichomes, pistils and stamen filaments.

It localises to the nucleus. It is found in the cytoplasm. The catalysed reaction is O-phospho-L-seryl-[protein] + H2O = L-seryl-[protein] + phosphate. It catalyses the reaction O-phospho-L-threonyl-[protein] + H2O = L-threonyl-[protein] + phosphate. Phosphatase activity is strongly reduced by the protein phosphatase inhibitor 2 (I-2). In terms of biological role, serine/threonine-protein phosphatase that possesses phosphatase activity toward para-nitrophenyl phosphate (pNPP) in vitro. Acts as a positive regulator in the gibberellin (GA) signaling pathway to regulate plant growth and development. Promotes the GA-induced and proteasomal-dependent degradation of the DELLA proteins RGA and GAI by directly binding and dephosphorylating these proteins. Involved in the regulation of phytochrome B (phyB) signaling pathway that controls photomorphogenesis. Promotes the proteasomal-dependent degradation of PIF5 factor by directly binding and dephosphorylating this protein. Involved in the regulation of pavement cell (PC) interdigitation by modulating the auxin efflux carrier PIN1 polarity and endocytic trafficking. Regulates PIN1 polar targeting through direct binding and dephosphorylation. Acts antagonistically with PID in regulating PC development. This Arabidopsis thaliana (Mouse-ear cress) protein is Serine/threonine-protein phosphatase PP1 isozyme 4.